Here is a 203-residue protein sequence, read N- to C-terminus: Ras-related protein RABG3b (203 aa).

15–22 (GDSGVGKT) serves as a coordination point for GTP. An Effector region motif is present at residues 37–45 (YKATIGADF). Residues 63–67 (DTAGQ), 125–128 (NKVD), and 158–159 (SA) each bind GTP. Residues cysteine 201 and cysteine 203 are each lipidated (S-geranylgeranyl cysteine). Cysteine 203 bears the Cysteine methyl ester mark.

This sequence belongs to the small GTPase superfamily. Rab family. Interacts with VPS39. As to expression, expressed in xylem cells of inflorescence stems.

Its subcellular location is the cell membrane. Intracellular vesicle trafficking and protein transport. Functions in autophagy. Involved in xylem and tracheary element differentiation. This chain is Ras-related protein RABG3b (RABG3B), found in Arabidopsis thaliana (Mouse-ear cress).